A 289-amino-acid chain; its full sequence is Diaminopimelate epimerase (289 aa).

Positions 15 and 76 each coordinate substrate. The active-site Proton donor is the C85. Substrate is bound by residues 86–87 (GN), N158, N191, and 209–210 (ER). The active-site Proton acceptor is the C218. 219–220 (GT) serves as a coordination point for substrate.

It belongs to the diaminopimelate epimerase family. Homodimer.

The protein resides in the cytoplasm. It catalyses the reaction (2S,6S)-2,6-diaminopimelate = meso-2,6-diaminopimelate. It functions in the pathway amino-acid biosynthesis; L-lysine biosynthesis via DAP pathway; DL-2,6-diaminopimelate from LL-2,6-diaminopimelate: step 1/1. Catalyzes the stereoinversion of LL-2,6-diaminopimelate (L,L-DAP) to meso-diaminopimelate (meso-DAP), a precursor of L-lysine and an essential component of the bacterial peptidoglycan. In Streptomyces coelicolor (strain ATCC BAA-471 / A3(2) / M145), this protein is Diaminopimelate epimerase.